Consider the following 183-residue polypeptide: ATP synthase subunit delta (183 aa).

The protein belongs to the ATPase delta chain family. In terms of assembly, F-type ATPases have 2 components, F(1) - the catalytic core - and F(0) - the membrane proton channel. F(1) has five subunits: alpha(3), beta(3), gamma(1), delta(1), epsilon(1). F(0) has three main subunits: a(1), b(2) and c(10-14). The alpha and beta chains form an alternating ring which encloses part of the gamma chain. F(1) is attached to F(0) by a central stalk formed by the gamma and epsilon chains, while a peripheral stalk is formed by the delta and b chains.

The protein resides in the cell membrane. Functionally, f(1)F(0) ATP synthase produces ATP from ADP in the presence of a proton or sodium gradient. F-type ATPases consist of two structural domains, F(1) containing the extramembraneous catalytic core and F(0) containing the membrane proton channel, linked together by a central stalk and a peripheral stalk. During catalysis, ATP synthesis in the catalytic domain of F(1) is coupled via a rotary mechanism of the central stalk subunits to proton translocation. This protein is part of the stalk that links CF(0) to CF(1). It either transmits conformational changes from CF(0) to CF(1) or is implicated in proton conduction. The polypeptide is ATP synthase subunit delta (Mesoplasma florum (strain ATCC 33453 / NBRC 100688 / NCTC 11704 / L1) (Acholeplasma florum)).